A 744-amino-acid chain; its full sequence is Eukaryotic translation initiation factor 3 subunit B (744 aa).

Residues 1–21 form a disordered region; that stretch reads MAPSFDHLPDPEEDEYDEEEL. Residues 11–21 are compositionally biased toward acidic residues; the sequence is PEEDEYDEEEL. Residues 40-126 enclose the RRM domain; it reads TFVVIDGLPE…HTLRVNKLTD (87 aa). 4 WD repeats span residues 193–232, 234–290, 307–348, and 577–622; these read DRQH…RQKR, AHPF…PLRS, PIKR…LLDK, and ADHY…LREE.

Belongs to the eIF-3 subunit B family. Component of the eukaryotic translation initiation factor 3 (eIF-3) complex.

The protein localises to the cytoplasm. RNA-binding component of the eukaryotic translation initiation factor 3 (eIF-3) complex, which is involved in protein synthesis of a specialized repertoire of mRNAs and, together with other initiation factors, stimulates binding of mRNA and methionyl-tRNAi to the 40S ribosome. The eIF-3 complex specifically targets and initiates translation of a subset of mRNAs involved in cell proliferation. The protein is Eukaryotic translation initiation factor 3 subunit B (prt1) of Botryotinia fuckeliana (strain B05.10) (Noble rot fungus).